The following is a 111-amino-acid chain: Large ribosomal subunit protein bL21 (111 aa).

The protein belongs to the bacterial ribosomal protein bL21 family. As to quaternary structure, part of the 50S ribosomal subunit. Contacts protein L20.

Functionally, this protein binds to 23S rRNA in the presence of protein L20. This is Large ribosomal subunit protein bL21 from Thermosynechococcus vestitus (strain NIES-2133 / IAM M-273 / BP-1).